The following is a 147-amino-acid chain: Nucleoside diphosphate kinase (147 aa).

The ATP site is built by K9, F57, R85, T91, R102, and N112. The active-site Pros-phosphohistidine intermediate is H115.

This sequence belongs to the NDK family. Homotetramer. The cofactor is Mg(2+).

Its subcellular location is the cytoplasm. It catalyses the reaction a 2'-deoxyribonucleoside 5'-diphosphate + ATP = a 2'-deoxyribonucleoside 5'-triphosphate + ADP. The enzyme catalyses a ribonucleoside 5'-diphosphate + ATP = a ribonucleoside 5'-triphosphate + ADP. Major role in the synthesis of nucleoside triphosphates other than ATP. The ATP gamma phosphate is transferred to the NDP beta phosphate via a ping-pong mechanism, using a phosphorylated active-site intermediate. This is Nucleoside diphosphate kinase from Listeria welshimeri serovar 6b (strain ATCC 35897 / DSM 20650 / CCUG 15529 / CIP 8149 / NCTC 11857 / SLCC 5334 / V8).